Reading from the N-terminus, the 462-residue chain is 3-deoxy-D-manno-octulosonic acid transferase (462 aa).

A helical; Signal-anchor membrane pass occupies residues 2–22 (MLLYYILSFILLPVYFIIIFI). Positions 47 to 90 (SLLDLQMSVNQEGFKVDTEHKATSYVYIHRNASLMYKLSLERSY) constitute an RPE1 insert domain. Catalysis depends on Glu-104, which acts as the Proton acceptor. Residues 308-309 (PR), 349-351 (FGE), and 374-377 (NILE) contribute to the CMP site.

The protein belongs to the glycosyltransferase group 1 family.

Its subcellular location is the cell inner membrane. The catalysed reaction is lipid IVA (E. coli) + CMP-3-deoxy-beta-D-manno-octulosonate = alpha-Kdo-(2-&gt;6)-lipid IVA (E. coli) + CMP + H(+). Its pathway is bacterial outer membrane biogenesis; LPS core biosynthesis. In terms of biological role, involved in lipopolysaccharide (LPS) biosynthesis. Catalyzes the transfer of 3-deoxy-D-manno-octulosonate (Kdo) residue(s) from CMP-Kdo to lipid IV(A), the tetraacyldisaccharide-1,4'-bisphosphate precursor of lipid A. This Rickettsia typhi (strain ATCC VR-144 / Wilmington) protein is 3-deoxy-D-manno-octulosonic acid transferase (waaA).